The following is a 207-amino-acid chain: Testis-expressed protein 35 (207 aa).

Residues 43–79 are a coiled coil; that stretch reads RKGMTRELKNELREVREQLTEKMEEIKQIKDIMDKDF.

As to expression, testis-specific. Expressed during spermatogenesis.

Its subcellular location is the nucleus. The chain is Testis-expressed protein 35 (Tex35) from Mus musculus (Mouse).